We begin with the raw amino-acid sequence, 810 residues long: Soluble starch synthase 2-3, chloroplastic/amyloplastic (810 aa).

A chloroplast-targeting transit peptide spans 1–16 (MSSAVVASSTTFLVAL). 2 disordered regions span residues 43-265 (GRAG…PIPA) and 281-313 (EPDA…SGPL). A compositionally biased stretch (basic and acidic residues) spans 63-83 (RDAGVVRRADDGENEAAVERA). Over residues 84–93 (GEDDEEEEEF) the composition is skewed to acidic residues. Residues 102 to 116 (RSRRGGVGKVLKRRG) are compositionally biased toward basic residues. Residues 129-148 (DAARVRGAAAPAPAPTQDAA) are compositionally biased toward low complexity. Residues 281-310 (EPDAAEDGDDDDDWADSDASDSEIDQDDDS) are compositionally biased toward acidic residues. Lysine 333 is a binding site for ADP-alpha-D-glucose.

This sequence belongs to the glycosyltransferase 1 family. Bacterial/plant glycogen synthase subfamily. As to expression, expressed most exclusively in endosperm.

It is found in the plastid. Its subcellular location is the amyloplast. It localises to the chloroplast. The enzyme catalyses [(1-&gt;4)-alpha-D-glucosyl](n) + ADP-alpha-D-glucose = [(1-&gt;4)-alpha-D-glucosyl](n+1) + ADP + H(+). Its pathway is glycan biosynthesis; starch biosynthesis. Its function is as follows. Plays an important role during endosperm starch synthesis. Determines the type of amylopectin structure of starch grain. Synthesizes long B1 amylopectin chains by elongating short A and B1 chains, independently of the other soluble starch synthases. Barely active in japonica subspecies. This chain is Soluble starch synthase 2-3, chloroplastic/amyloplastic (SSII-3), found in Oryza sativa subsp. indica (Rice).